Reading from the N-terminus, the 425-residue chain is Stabilizer of axonemal microtubules 4 (425 aa).

2 disordered regions span residues 259 to 297 (RGSD…YQPP) and 315 to 335 (NKEP…SYEQ). A compositionally biased stretch (basic and acidic residues) spans 260 to 272 (GSDRDTGYSRVSE). The span at 277–290 (PRMPTPSSQPTSMS) shows a compositional bias: low complexity. Over residues 321–332 (FTLNNPSYVRSS) the composition is skewed to polar residues.

As to quaternary structure, microtubule inner protein component of sperm flagellar doublet microtubules. Interacts with PPP1CA. Expressed in brain, ovaries and testis. Expressed in the tracheal epithelium and in secondary spermatocytes and spermatids present in the seminiferous tubule. Expressed in ependymal cells lining the ventricular walls of the brain.

It is found in the cell projection. Its subcellular location is the cilium. The protein resides in the cytoplasm. The protein localises to the cytoskeleton. It localises to the flagellum axoneme. The sequence is that of Stabilizer of axonemal microtubules 4 from Rattus norvegicus (Rat).